A 195-amino-acid chain; its full sequence is Dynactin subunit 6 (195 aa).

This sequence belongs to the dynactin subunits 5/6 family. Dynactin subunit 6 subfamily. As to quaternary structure, member of the pointed-end complex of the dynactin shoulder complex which contains dctn4, dctn5 and dctn6 subunits and Actr10. Within the complex dctn6 forms a heterodimer with dctn5. Interacts with plk1.

It localises to the cytoplasm. The protein resides in the cytoskeleton. Its subcellular location is the chromosome. It is found in the centromere. The protein localises to the kinetochore. Functionally, part of the dynactin complex that activates the molecular motor dynein for ultra-processive transport along microtubules. This chain is Dynactin subunit 6 (dctn6), found in Danio rerio (Zebrafish).